The following is a 150-amino-acid chain: UPF0756 membrane protein HI_1074 (150 aa).

Transmembrane regions (helical) follow at residues 1–21, 52–72, 81–101, and 123–143; these read MTLQ…LGVL, YGVK…LVSG, GFLS…AWLA, and IIGV…AGIL.

Belongs to the UPF0756 family.

It is found in the cell membrane. The chain is UPF0756 membrane protein HI_1074 from Haemophilus influenzae (strain ATCC 51907 / DSM 11121 / KW20 / Rd).